The following is a 646-amino-acid chain: Macrolide export ATP-binding/permease protein MacB (646 aa).

Residues 5 to 243 (IELKGVSRTY…TLPKTNRIRQ (239 aa)) enclose the ABC transporter domain. 41-48 (GASGSGKS) contributes to the ATP binding site. 4 consecutive transmembrane segments (helical) span residues 272-292 (TLTMIGIVFGIASVVTVVALG), 518-538 (FSILILMVACISLMIGSIGVM), 570-590 (IIEAVLVCLIGGALGIALSYI), and 611-631 (AAVAAFFCSTLIGIIFGYLPA).

It belongs to the ABC transporter superfamily. Macrolide exporter (TC 3.A.1.122) family. In terms of assembly, homodimer. Part of the tripartite efflux system MacAB-TolC, which is composed of an inner membrane transporter, MacB, a periplasmic membrane fusion protein, MacA, and an outer membrane component, TolC. The complex forms a large protein conduit and can translocate molecules across both the inner and outer membranes. Interacts with MacA.

The protein resides in the cell inner membrane. Part of the tripartite efflux system MacAB-TolC. MacB is a non-canonical ABC transporter that contains transmembrane domains (TMD), which form a pore in the inner membrane, and an ATP-binding domain (NBD), which is responsible for energy generation. Confers resistance against macrolides. This chain is Macrolide export ATP-binding/permease protein MacB, found in Escherichia coli.